The chain runs to 110 residues: uncharacterized protein (110 aa).

3 consecutive transmembrane segments (helical) span residues 5–25 (ILAIIFVAVGTYLIRYIPIHL), 62–82 (FPIIFSNVLISTISLIFAIVS), and 90–110 (GISILISVVIYYLASKFLISI).

To A.fulgidus AF1754.

The protein localises to the cell membrane. This is an uncharacterized protein from Methanocaldococcus jannaschii (strain ATCC 43067 / DSM 2661 / JAL-1 / JCM 10045 / NBRC 100440) (Methanococcus jannaschii).